A 211-amino-acid polypeptide reads, in one-letter code: Probable endopeptidase cgR_2070 (211 aa).

Positions 1–35 are cleaved as a signal peptide; the sequence is MGKHRRNNSNATRKAVAASAVALGATAAIASPAQA. The 115-residue stretch at 97–211 folds into the NlpC/P60 domain; that stretch reads ASTGQAIVDA…YMPFHSAVRF (115 aa). The active-site Nucleophile is the Cys-127. Catalysis depends on His-175, which acts as the Proton acceptor. His-187 is a catalytic residue.

Belongs to the peptidase C40 family.

The protein resides in the secreted. The protein is Probable endopeptidase cgR_2070 of Corynebacterium glutamicum (strain R).